A 950-amino-acid polypeptide reads, in one-letter code: General transcription factor II-I repeat domain-containing protein 2 (950 aa).

GTF2I-like repeat units follow at residues 100-194 (QVDS…QPGG) and 324-418 (LSSL…SNVG).

Belongs to the TFII-I family.

It localises to the nucleus. This is General transcription factor II-I repeat domain-containing protein 2 (GTF2IRD2) from Bos taurus (Bovine).